The following is a 433-amino-acid chain: Alpha-(1,3)-fucosyltransferase fut-1 (433 aa).

The Cytoplasmic segment spans residues 1-12; the sequence is MTARSIKLFFAR. Residues 13-32 form a helical; Signal-anchor for type II membrane protein membrane-spanning segment; that stretch reads WKYLMFACCITYLLVIYAPI. The Lumenal portion of the chain corresponds to 33 to 433; sequence SKSEQKDWKE…GTLVDSIPLD (401 aa). N-linked (GlcNAc...) asparagine glycans are attached at residues asparagine 194 and asparagine 359.

It belongs to the glycosyltransferase 10 family. Mg(2+) is required as a cofactor. Mn(2+) serves as cofactor. Post-translationally, N-glycosylated. Glycosylation is important for enzymatic activity. Expressed in the pharyngeal-intestinal (PI) and anal valves. Expressed in ASG neurons and in one or two neurons in the retrovesicular ganglion and two neurons posterior to the PI valve and PHA and PHB neurons in the tail.

The protein resides in the golgi apparatus. Its subcellular location is the golgi stack membrane. It carries out the reaction N(4)-{beta-D-GlcNAc-(1-&gt;2)-alpha-D-Man-(1-&gt;3)-[beta-D-GlcNAc-(1-&gt;2)-alpha-D-Man-(1-&gt;6)]-beta-D-Man-(1-&gt;4)-beta-D-GlcNAc-(1-&gt;4)-beta-D-GlcNAc}-L-asparaginyl-[protein] + GDP-beta-L-fucose = N(4)-{beta-D-GlcNAc-(1-&gt;2)-alpha-D-Man-(1-&gt;3)-[beta-D-GlcNAc-(1-&gt;2)-alpha-D-Man-(1-&gt;6)]-beta-D-Man-(1-&gt;4)-beta-D-GlcNAc-(1-&gt;4)-[alpha-L-Fuc(1-&gt;3)]-beta-D-GlcNAc}-L-asparaginyl-[protein] + GDP + H(+). It functions in the pathway protein modification; protein glycosylation. Inhibited by Cu(2+) or Zn(2+) and to a lesser extent Ni(2+) ions. Its function is as follows. Preferentially catalyzes the addition of fucose in alpha 1-3 linkage to the first GlcNAc residue (with or without alpha 1,6-linked fucose), next to the peptide chains in N-glycans. Unlike in mammals, does not require the prior action of N-acetylglucosaminyltransferase I to generate complex N-glycans. The protein is Alpha-(1,3)-fucosyltransferase fut-1 of Caenorhabditis elegans.